Here is a 197-residue protein sequence, read N- to C-terminus: Outer membrane protein 26 (197 aa).

The signal sequence occupies residues 1–23; that stretch reads MKNIAKVTALALGIALASGYASA.

Belongs to the Skp family.

The protein resides in the cell outer membrane. The polypeptide is Outer membrane protein 26 (omp26) (Haemophilus influenzae (strain ATCC 51907 / DSM 11121 / KW20 / Rd)).